Reading from the N-terminus, the 931-residue chain is Myelin regulatory factor homolog 1 (931 aa).

The Cytoplasmic portion of the chain corresponds to 1–658; sequence MSSSDLLKGE…SCGSRLSQGT (658 aa). Residues 29–143 are disordered; the sequence is TDEDDGSMVS…QQHQQTRGGN (115 aa). A compositionally biased stretch (polar residues) spans 37-52; it reads VSPTSSADSMHQNLGV. Low complexity predominate over residues 53-68; sequence QQQQQQMLQAQQRQNQ. Residues 117–126 show a composition bias toward polar residues; the sequence is DNGNQTMNNI. Over residues 127–138 the composition is skewed to low complexity; the sequence is QSQQLSQQQHQQ. Positions 169–436 form a DNA-binding region, NDT80; that stretch reads GTAAVNQPTN…TNPGSFEPQD (268 aa). One can recognise a Peptidase S74 domain in the interval 483-582; that stretch reads SDIRLKEAIT…RMTGDLDSKI (100 aa). A helical transmembrane segment spans residues 659-679; sequence VVTLVSIMAACLLAMSALYVL. Topologically, residues 680–931 are lumenal; it reads DWHNRNYGYH…FYRMCTLSSS (252 aa). N-linked (GlcNAc...) asparagine glycosylation is found at Asn-797 and Asn-912.

This sequence belongs to the MRF family. Homotrimer. Interacts with myrf-2. Interacts (via C-terminus) with pan-1 (via LRR regions); the interaction promotes the role of myrf-1 in the synaptic remodeling of DD GABAergic motor neurons at the cell membrane. Myelin regulatory factor: Follows autocatalytic cleavage via the peptidase S74 domain. Autoprocessing is apparently constitutive and is essential for transcriptional activity. As to expression, widely expressed in many tissues, including neuronal, muscle and epidermal stem cells. In neurons, expressed in dorsal D (DD) GABAergic motor neurons.

It localises to the endoplasmic reticulum membrane. The protein resides in the nucleus. The protein localises to the apical cell membrane. It is found in the cytoplasm. In terms of biological role, constitutes a precursor of the transcription factor. Mediates the autocatalytic cleavage that releases the Myelin regulatory factor homolog 1, N-terminal component that specifically activates transcription of genes involved in synaptic rewiring during nervous system maturation. Membrane-bound part that has no transcription factor activity and remains attached to the endoplasmic reticulum membrane following cleavage. Functionally, transcription factor that specifically activates expression of genes involved in synaptic rewiring during nervous system maturation. Specifically required for dorsal D (DD) GABAergic motor neurons synaptic rewiring. Acts in complex with myrf-2 paralog. The protein is Myelin regulatory factor homolog 1 of Caenorhabditis elegans.